Here is a 329-residue protein sequence, read N- to C-terminus: Pantothenate kinase (329 aa).

107–114 is a binding site for ATP; it reads GSVAVGKS.

It belongs to the prokaryotic pantothenate kinase family.

The protein resides in the cytoplasm. The enzyme catalyses (R)-pantothenate + ATP = (R)-4'-phosphopantothenate + ADP + H(+). The protein operates within cofactor biosynthesis; coenzyme A biosynthesis; CoA from (R)-pantothenate: step 1/5. The protein is Pantothenate kinase of Streptomyces avermitilis (strain ATCC 31267 / DSM 46492 / JCM 5070 / NBRC 14893 / NCIMB 12804 / NRRL 8165 / MA-4680).